A 96-amino-acid chain; its full sequence is Large ribosomal subunit protein bL21 (96 aa).

The segment covering 73-84 has biased composition (basic residues); it reads KRRKRYQSRNGH. The segment at 73–96 is disordered; it reads KRRKRYQSRNGHRQQMTQIEVVSL. Positions 85–96 are enriched in polar residues; that stretch reads RQQMTQIEVVSL.

The protein belongs to the bacterial ribosomal protein bL21 family. In terms of assembly, part of the 50S ribosomal subunit. Contacts protein L20.

Functionally, this protein binds to 23S rRNA in the presence of protein L20. The sequence is that of Large ribosomal subunit protein bL21 from Chlorobium luteolum (strain DSM 273 / BCRC 81028 / 2530) (Pelodictyon luteolum).